The following is a 111-amino-acid chain: MYYKFSSFTQKLAGAWASEAYTPQGLKPVSTEAPPIIFATPTKLTSSVTAYDYSGKNKVPELQKFFQKADGFHLKRGLPDQMLYRTTMALTLGGTIYCLIALYMASQPRNK.

The N-terminal 54 residues, 1–54, are a transit peptide targeting the mitochondrion; sequence MYYKFSSFTQKLAGAWASEAYTPQGLKPVSTEAPPIIFATPTKLTSSVTAYDYS. Lys-68 is subject to N6-acetyllysine. Residues 79-104 traverse the membrane as a helical segment; the sequence is PDQMLYRTTMALTLGGTIYCLIALYM.

This sequence belongs to the cytochrome c oxidase VIIa family.

The protein resides in the mitochondrion inner membrane. Functionally, non-functional protein. In contrast to the protein found in other strains (AC Q99KD6), cannot induce the assembly of mitochondrial respiratory supercomplexes. The polypeptide is Cytochrome c oxidase subunit 7A2-like, mitochondrial (Mus musculus (Mouse)).